Here is a 253-residue protein sequence, read N- to C-terminus: MNDPRKTESTTHFGYQSVPESQKARKVAEVFHSVAAKYDLMNDVLSGGLHRLWKRFTIELSGVRRGNRVLDIAGGTGDLTLQFSRLVGESGEVLLADINDSMLKVGRDRLLDRGVAGNVRFVQADAEKLPFPDNHFDVITIAFGLRNVTRKEDALRSMLRVLKPGGRLLVLEFSKPSNALLGKVYDAYSFAFMPLAGKLITNDADSYRYLAESIRMHPDQETLKSMMAGAGFERVTYHNMTGGIVALHRGLKP.

S-adenosyl-L-methionine contacts are provided by residues Thr-76, Asp-97, and 125–126 (DA).

This sequence belongs to the class I-like SAM-binding methyltransferase superfamily. MenG/UbiE family.

The catalysed reaction is a 2-demethylmenaquinol + S-adenosyl-L-methionine = a menaquinol + S-adenosyl-L-homocysteine + H(+). It carries out the reaction a 2-methoxy-6-(all-trans-polyprenyl)benzene-1,4-diol + S-adenosyl-L-methionine = a 5-methoxy-2-methyl-3-(all-trans-polyprenyl)benzene-1,4-diol + S-adenosyl-L-homocysteine + H(+). It functions in the pathway quinol/quinone metabolism; menaquinone biosynthesis; menaquinol from 1,4-dihydroxy-2-naphthoate: step 2/2. The protein operates within cofactor biosynthesis; ubiquinone biosynthesis. Functionally, methyltransferase required for the conversion of demethylmenaquinol (DMKH2) to menaquinol (MKH2) and the conversion of 2-polyprenyl-6-methoxy-1,4-benzoquinol (DDMQH2) to 2-polyprenyl-3-methyl-6-methoxy-1,4-benzoquinol (DMQH2). This chain is Ubiquinone/menaquinone biosynthesis C-methyltransferase UbiE, found in Azotobacter vinelandii (strain DJ / ATCC BAA-1303).